The sequence spans 410 residues: D-3-phosphoglycerate dehydrogenase (410 aa).

Residues 161-162 (HI), Asp-181, 238-240 (ASR), and Asp-264 each bind NAD(+). Arg-240 is a catalytic residue. Glu-269 is an active-site residue. The active-site Proton donor is His-292. Residue 292-295 (HIGG) coordinates NAD(+). The ACT domain occupies 339–410 (RLMHIHENRP…PGTIRARLLY (72 aa)).

It belongs to the D-isomer specific 2-hydroxyacid dehydrogenase family. As to quaternary structure, homotetramer.

It catalyses the reaction (2R)-3-phosphoglycerate + NAD(+) = 3-phosphooxypyruvate + NADH + H(+). The enzyme catalyses (R)-2-hydroxyglutarate + NAD(+) = 2-oxoglutarate + NADH + H(+). It participates in amino-acid biosynthesis; L-serine biosynthesis; L-serine from 3-phospho-D-glycerate: step 1/3. Its activity is regulated as follows. In bacteria displays feedback inhibition by L-serine. Catalyzes the reversible oxidation of 3-phospho-D-glycerate to 3-phosphonooxypyruvate, the first step of the phosphorylated L-serine biosynthesis pathway. Also catalyzes the reversible oxidation of 2-hydroxyglutarate to 2-oxoglutarate. This Escherichia coli O6:H1 (strain CFT073 / ATCC 700928 / UPEC) protein is D-3-phosphoglycerate dehydrogenase (serA).